A 336-amino-acid chain; its full sequence is Phosphate acyltransferase (336 aa).

The protein belongs to the PlsX family. Homodimer. Probably interacts with PlsY.

The protein resides in the cytoplasm. It carries out the reaction a fatty acyl-[ACP] + phosphate = an acyl phosphate + holo-[ACP]. Its pathway is lipid metabolism; phospholipid metabolism. Catalyzes the reversible formation of acyl-phosphate (acyl-PO(4)) from acyl-[acyl-carrier-protein] (acyl-ACP). This enzyme utilizes acyl-ACP as fatty acyl donor, but not acyl-CoA. The chain is Phosphate acyltransferase from Pseudomonas fluorescens (strain ATCC BAA-477 / NRRL B-23932 / Pf-5).